The chain runs to 230 residues: Triosephosphate isomerase (230 aa).

9 to 11 (NYK) contacts substrate. Residue His-93 is the Electrophile of the active site. Glu-141 acts as the Proton acceptor in catalysis. Substrate is bound by residues Ile-146, Gly-180, and 201–202 (AS).

This sequence belongs to the triosephosphate isomerase family. As to quaternary structure, homotetramer; dimer of dimers.

It is found in the cytoplasm. It catalyses the reaction D-glyceraldehyde 3-phosphate = dihydroxyacetone phosphate. The protein operates within carbohydrate biosynthesis; gluconeogenesis. It participates in carbohydrate degradation; glycolysis; D-glyceraldehyde 3-phosphate from glycerone phosphate: step 1/1. Functionally, involved in the gluconeogenesis. Catalyzes stereospecifically the conversion of dihydroxyacetone phosphate (DHAP) to D-glyceraldehyde-3-phosphate (G3P). The sequence is that of Triosephosphate isomerase from Sulfolobus acidocaldarius (strain ATCC 33909 / DSM 639 / JCM 8929 / NBRC 15157 / NCIMB 11770).